Here is a 408-residue protein sequence, read N- to C-terminus: UDP-N-acetylglucosamine--dolichyl-phosphate N-acetylglucosaminephosphotransferase (408 aa).

A run of 2 helical transmembrane segments spans residues 6 to 26 (SLLG…IYLP) and 32 to 52 (WIIV…YKLI). UDP-N-acetyl-alpha-D-glucosamine is bound by residues aspartate 68 and glutamate 84. Helical transmembrane passes span 87–107 (GICV…FQWF) and 120–140 (AALT…VLNL). Position 145 (lysine 145) interacts with dolichyl phosphate. The next 2 membrane-spanning stretches (helical) occupy residues 147 to 167 (ILPM…TTVV) and 181 to 201 (LGVV…LAIF). 200-208 (IFCTNSINI) is a dolichyl phosphate binding site. Asparagine 207 serves as a coordination point for Mg(2+). Asparagine 213 contributes to the UDP-N-acetyl-alpha-D-glucosamine binding site. 2 helical membrane-spanning segments follow: residues 221-241 (VVIA…ASSV) and 258-278 (HLFS…LLFY). Aspartate 289 lines the Mg(2+) pocket. The helical transmembrane segment at 297–317 (MCFAVVAILCHFSKTLLLFFI) threads the bilayer. 338–340 (RHR) provides a ligand contact to UDP-N-acetyl-alpha-D-glucosamine. The next 2 membrane-spanning stretches (helical) occupy residues 351–371 (MEAI…TGPL) and 376–396 (LCVY…GIRY).

Belongs to the glycosyltransferase 4 family. As to quaternary structure, homodimer. Mg(2+) is required as a cofactor.

Its subcellular location is the endoplasmic reticulum membrane. It catalyses the reaction a di-trans,poly-cis-dolichyl phosphate + UDP-N-acetyl-alpha-D-glucosamine = an N-acetyl-alpha-D-glucosaminyl-diphospho-di-trans,poly-cis-dolichol + UMP. Its pathway is protein modification; protein glycosylation. With respect to regulation, inhibited by natural nucleoside antibiotic tunicamycin, which acts as a structural analog and competitor of UDP-GlcNAc. In terms of biological role, UDP-N-acetylglucosamine--dolichyl-phosphate N-acetylglucosaminephosphotransferase that operates in the biosynthetic pathway of dolichol-linked oligosaccharides, the glycan precursors employed in protein asparagine (N)-glycosylation. The assembly of dolichol-linked oligosaccharides begins on the cytosolic side of the endoplasmic reticulum membrane and finishes in its lumen. The sequential addition of sugars to dolichol pyrophosphate produces dolichol-linked oligosaccharides containing fourteen sugars, including two GlcNAcs, nine mannoses and three glucoses. Once assembled, the oligosaccharide is transferred from the lipid to nascent proteins by oligosaccharyltransferases. Catalyzes the initial step of dolichol-linked oligosaccharide biosynthesis, transfering GlcNAc-1-P from cytosolic UDP-GlcNAc onto the carrier lipid dolichyl phosphate (P-dolichol), yielding GlcNAc-P-P-dolichol embedded in the cytoplasmic leaflet of the endoplasmic reticulum membrane. This is UDP-N-acetylglucosamine--dolichyl-phosphate N-acetylglucosaminephosphotransferase (alg7) from Dictyostelium discoideum (Social amoeba).